Consider the following 353-residue polypeptide: Homeobox protein Mohawk (353 aa).

Positions Arg18 to Ser27 are enriched in basic and acidic residues. The segment at Arg18–Pro50 is disordered. Positions Val71–Val132 form a DNA-binding region, homeobox; TALE-type. 2 disordered regions span residues Leu157–Tyr183 and Met243–Asp302.

The protein belongs to the TALE/IRO homeobox family.

The protein resides in the nucleus. May act as a morphogenetic regulator of cell adhesion. Participates in the early events that lead to differentiation. The polypeptide is Homeobox protein Mohawk (Mkx) (Mus musculus (Mouse)).